Consider the following 441-residue polypeptide: BTB/POZ domain-containing protein At2g24240 (441 aa).

A BTB domain is found at aspartate 6–alanine 76.

It participates in protein modification; protein ubiquitination. May act as a substrate-specific adapter of an E3 ubiquitin-protein ligase complex (CUL3-RBX1-BTB) which mediates the ubiquitination and subsequent proteasomal degradation of target proteins. In Arabidopsis thaliana (Mouse-ear cress), this protein is BTB/POZ domain-containing protein At2g24240.